Reading from the N-terminus, the 121-residue chain is Methylglyoxal synthase (121 aa).

Residues 1–121 (MMKVALIAHD…SAELFLRALN (121 aa)) form the MGS-like domain. Residues His9, Lys13, 35-38 (TGTT), and 55-56 (SG) contribute to the substrate site. Asp61 acts as the Proton donor/acceptor in catalysis. Substrate is bound at residue His88.

It belongs to the methylglyoxal synthase family.

The enzyme catalyses dihydroxyacetone phosphate = methylglyoxal + phosphate. In terms of biological role, catalyzes the formation of methylglyoxal from dihydroxyacetone phosphate. The polypeptide is Methylglyoxal synthase (Carboxydothermus hydrogenoformans (strain ATCC BAA-161 / DSM 6008 / Z-2901)).